The sequence spans 206 residues: MLGNLYILSAPSGAGKSSLINALLADLPRTEVQLSISHTTRQPRVGETHGIHYYFTEHHEFESLIEQGHFLEWARVFDHYYGTSLPMIERSLAQGIDVFLDIDWQGARQIREKVPNVKTIFILPPSRAELEKRLVGRGQDSLETIAKRMEQAVSEMTHYNEFDYVIINDQFKTALTELKSILTAERLKQSAQAIRQQALIAELLAE.

One can recognise a Guanylate kinase-like domain in the interval 3-183 (GNLYILSAPS…ALTELKSILT (181 aa)). 10 to 17 (APSGAGKS) provides a ligand contact to ATP.

The protein belongs to the guanylate kinase family.

It localises to the cytoplasm. It catalyses the reaction GMP + ATP = GDP + ADP. Its function is as follows. Essential for recycling GMP and indirectly, cGMP. This is Guanylate kinase from Haemophilus ducreyi (strain 35000HP / ATCC 700724).